Reading from the N-terminus, the 70-residue chain is Alpha-elapitoxin-Ast2a (70 aa).

5 disulfides stabilise this stretch: Cys-3-Cys-20, Cys-13-Cys-41, Cys-26-Cys-30, Cys-45-Cys-56, and Cys-57-Cys-62. A Serine amide modification is found at Ser-70.

Belongs to the three-finger toxin family. Long-chain subfamily. Type II alpha-neurotoxin sub-subfamily. Expressed by the venom gland.

Its subcellular location is the secreted. Functionally, binds with high affinity to muscular (alpha-1/CHRNA1) and neuronal (alpha-7/CHRNA7) nicotinic acetylcholine receptor (nAChR) and inhibits acetylcholine from binding to the receptor, thereby impairing neuromuscular and neuronal transmission. The protein is Alpha-elapitoxin-Ast2a of Hydrophis stokesii (Stokes's sea snake).